A 556-amino-acid chain; its full sequence is 2-succinyl-5-enolpyruvyl-6-hydroxy-3-cyclohexene-1-carboxylate synthase (556 aa).

It belongs to the TPP enzyme family. MenD subfamily. In terms of assembly, homodimer. Mg(2+) serves as cofactor. It depends on Mn(2+) as a cofactor. Requires thiamine diphosphate as cofactor.

It catalyses the reaction isochorismate + 2-oxoglutarate + H(+) = 5-enolpyruvoyl-6-hydroxy-2-succinyl-cyclohex-3-ene-1-carboxylate + CO2. It functions in the pathway quinol/quinone metabolism; 1,4-dihydroxy-2-naphthoate biosynthesis; 1,4-dihydroxy-2-naphthoate from chorismate: step 2/7. It participates in quinol/quinone metabolism; menaquinone biosynthesis. Catalyzes the thiamine diphosphate-dependent decarboxylation of 2-oxoglutarate and the subsequent addition of the resulting succinic semialdehyde-thiamine pyrophosphate anion to isochorismate to yield 2-succinyl-5-enolpyruvyl-6-hydroxy-3-cyclohexene-1-carboxylate (SEPHCHC). The chain is 2-succinyl-5-enolpyruvyl-6-hydroxy-3-cyclohexene-1-carboxylate synthase from Escherichia fergusonii (strain ATCC 35469 / DSM 13698 / CCUG 18766 / IAM 14443 / JCM 21226 / LMG 7866 / NBRC 102419 / NCTC 12128 / CDC 0568-73).